The following is a 506-amino-acid chain: DNA nucleotidylexotransferase (506 aa).

Residues 11–17 carry the Nuclear localization signal motif; that stretch reads SQRKRQK. Positions 27–124 constitute a BRCT domain; that stretch reads GYEIKFNKLV…RPVDLEKKYH (98 aa). The interval 258-262 is involved in DNA binding; the sequence is VGVKT. Residues 333-338 and 342-345 each bind a 2'-deoxyribonucleoside 5'-triphosphate; these read GFRRGK and HDID. Mg(2+) is bound by residues aspartate 343, aspartate 345, and aspartate 430. An a 2'-deoxyribonucleoside 5'-triphosphate-binding site is contributed by 445-446; sequence GW.

The protein belongs to the DNA polymerase type-X family. Requires Mg(2+) as cofactor.

Its subcellular location is the nucleus. The catalysed reaction is DNA(n) + a 2'-deoxyribonucleoside 5'-triphosphate = DNA(n+1) + diphosphate. Its function is as follows. Template-independent DNA polymerase which catalyzes the random addition of deoxynucleoside 5'-triphosphate to the 3'-end of a DNA initiator. One of the in vivo functions of this enzyme is the addition of nucleotides at the junction (N region) of rearranged Ig heavy chain and T-cell receptor gene segments during the maturation of B- and T-cells. In Gallus gallus (Chicken), this protein is DNA nucleotidylexotransferase (DNTT).